The following is a 541-amino-acid chain: Putative ammonium transporter sll0537 (541 aa).

11 helical membrane-spanning segments follow: residues 6-26 (TLWL…FMCL), 44-64 (FADF…IMFG), 86-106 (LAVF…IISG), 117-137 (YLLV…DWAW), 161-181 (FAGS…TILV), 203-223 (MPFS…FNGG), 235-255 (IMVN…LISL), 260-280 (MIQV…ITAS), 283-303 (VVMT…AYLV), 316-336 (VDAV…VGLF), and 356-376 (LLGI…FLTL).

Belongs to the ammonia transporter channel (TC 1.A.11.2) family.

The protein resides in the cell membrane. The protein is Putative ammonium transporter sll0537 of Synechocystis sp. (strain ATCC 27184 / PCC 6803 / Kazusa).